Consider the following 102-residue polypeptide: uncharacterized protein (102 aa).

The N-terminal stretch at 1-22 (MKFKYGATLFSGFLGLSAILAA) is a signal peptide. The N-palmitoyl cysteine moiety is linked to residue C23. A lipid anchor (S-diacylglycerol cysteine) is attached at C23.

It belongs to the MG185/MG260 family.

The protein resides in the cell membrane. This is an uncharacterized protein from Mycoplasma pneumoniae (strain ATCC 29342 / M129 / Subtype 1) (Mycoplasmoides pneumoniae).